A 90-amino-acid chain; its full sequence is UPF0297 protein BH1268 (90 aa).

Belongs to the UPF0297 family.

The protein is UPF0297 protein BH1268 of Halalkalibacterium halodurans (strain ATCC BAA-125 / DSM 18197 / FERM 7344 / JCM 9153 / C-125) (Bacillus halodurans).